The following is a 104-amino-acid chain: Protein ArtA (104 aa).

The polypeptide is Protein ArtA (artA) (Escherichia coli (strain K12)).